We begin with the raw amino-acid sequence, 135 residues long: Large ribosomal subunit protein bL21 (135 aa).

The segment covering 109 to 128 (TLATAQSAPPSTSEATTDTT) has biased composition (polar residues). Residues 109–135 (TLATAQSAPPSTSEATTDTTGIPAAEE) are disordered.

This sequence belongs to the bacterial ribosomal protein bL21 family. As to quaternary structure, part of the 50S ribosomal subunit. Contacts protein L20.

Functionally, this protein binds to 23S rRNA in the presence of protein L20. The polypeptide is Large ribosomal subunit protein bL21 (Synechococcus sp. (strain JA-3-3Ab) (Cyanobacteria bacterium Yellowstone A-Prime)).